The following is a 128-amino-acid chain: Large ribosomal subunit protein uL22 (128 aa).

The protein belongs to the universal ribosomal protein uL22 family. As to quaternary structure, part of the 50S ribosomal subunit.

Functionally, this protein binds specifically to 23S rRNA; its binding is stimulated by other ribosomal proteins, e.g. L4, L17, and L20. It is important during the early stages of 50S assembly. It makes multiple contacts with different domains of the 23S rRNA in the assembled 50S subunit and ribosome. Its function is as follows. The globular domain of the protein is located near the polypeptide exit tunnel on the outside of the subunit, while an extended beta-hairpin is found that lines the wall of the exit tunnel in the center of the 70S ribosome. In Rhodopseudomonas palustris (strain HaA2), this protein is Large ribosomal subunit protein uL22.